The following is a 334-amino-acid chain: Holliday junction branch migration complex subunit RuvB (334 aa).

Residues 1–182 (MDDRMVDQSM…FGVHLRLEYY (182 aa)) form a large ATPase domain (RuvB-L) region. Residues leucine 21, arginine 22, glycine 63, lysine 66, threonine 67, threonine 68, 129–131 (EDF), arginine 172, tyrosine 182, and arginine 219 each bind ATP. Residue threonine 67 coordinates Mg(2+). The tract at residues 183–253 (QELELKEIIV…TTRASLQLLQ (71 aa)) is small ATPAse domain (RuvB-S). A head domain (RuvB-H) region spans residues 256–334 (DEGLDYIDHK…HFSKKNGKKE (79 aa)). DNA-binding residues include arginine 292, arginine 311, and arginine 316.

The protein belongs to the RuvB family. As to quaternary structure, homohexamer. Forms an RuvA(8)-RuvB(12)-Holliday junction (HJ) complex. HJ DNA is sandwiched between 2 RuvA tetramers; dsDNA enters through RuvA and exits via RuvB. An RuvB hexamer assembles on each DNA strand where it exits the tetramer. Each RuvB hexamer is contacted by two RuvA subunits (via domain III) on 2 adjacent RuvB subunits; this complex drives branch migration. In the full resolvosome a probable DNA-RuvA(4)-RuvB(12)-RuvC(2) complex forms which resolves the HJ.

The protein resides in the cytoplasm. The catalysed reaction is ATP + H2O = ADP + phosphate + H(+). In terms of biological role, the RuvA-RuvB-RuvC complex processes Holliday junction (HJ) DNA during genetic recombination and DNA repair, while the RuvA-RuvB complex plays an important role in the rescue of blocked DNA replication forks via replication fork reversal (RFR). RuvA specifically binds to HJ cruciform DNA, conferring on it an open structure. The RuvB hexamer acts as an ATP-dependent pump, pulling dsDNA into and through the RuvAB complex. RuvB forms 2 homohexamers on either side of HJ DNA bound by 1 or 2 RuvA tetramers; 4 subunits per hexamer contact DNA at a time. Coordinated motions by a converter formed by DNA-disengaged RuvB subunits stimulates ATP hydrolysis and nucleotide exchange. Immobilization of the converter enables RuvB to convert the ATP-contained energy into a lever motion, pulling 2 nucleotides of DNA out of the RuvA tetramer per ATP hydrolyzed, thus driving DNA branch migration. The RuvB motors rotate together with the DNA substrate, which together with the progressing nucleotide cycle form the mechanistic basis for DNA recombination by continuous HJ branch migration. Branch migration allows RuvC to scan DNA until it finds its consensus sequence, where it cleaves and resolves cruciform DNA. This is Holliday junction branch migration complex subunit RuvB from Staphylococcus saprophyticus subsp. saprophyticus (strain ATCC 15305 / DSM 20229 / NCIMB 8711 / NCTC 7292 / S-41).